Reading from the N-terminus, the 77-residue chain is MPKRVLQGVVISSKADKTVTVKVERKFKHPIYKKFVKVSKKYAAHDSENRYQEGDKVSIIESRPISKTKTWIVVNGK.

This sequence belongs to the universal ribosomal protein uS17 family. In terms of assembly, part of the 30S ribosomal subunit.

Its function is as follows. One of the primary rRNA binding proteins, it binds specifically to the 5'-end of 16S ribosomal RNA. The protein is Small ribosomal subunit protein uS17 of Rickettsia canadensis (strain McKiel).